A 226-amino-acid polypeptide reads, in one-letter code: uncharacterized protein (226 aa).

The protein belongs to the IIV-6 350L family.

This is an uncharacterized protein from Invertebrate iridescent virus 3 (IIV-3).